Consider the following 687-residue polypeptide: DNA-directed RNA polymerase subunit beta' (687 aa).

Zn(2+) is bound by residues Cys-69, Cys-71, Cys-87, and Cys-90. Mg(2+) is bound by residues Asp-491, Asp-493, and Asp-495.

The protein belongs to the RNA polymerase beta' chain family. RpoC1 subfamily. As to quaternary structure, in plastids the minimal PEP RNA polymerase catalytic core is composed of four subunits: alpha, beta, beta', and beta''. When a (nuclear-encoded) sigma factor is associated with the core the holoenzyme is formed, which can initiate transcription. Mg(2+) is required as a cofactor. Requires Zn(2+) as cofactor.

It localises to the plastid. It is found in the chloroplast. It catalyses the reaction RNA(n) + a ribonucleoside 5'-triphosphate = RNA(n+1) + diphosphate. DNA-dependent RNA polymerase catalyzes the transcription of DNA into RNA using the four ribonucleoside triphosphates as substrates. The polypeptide is DNA-directed RNA polymerase subunit beta' (Glycine max (Soybean)).